Consider the following 808-residue polypeptide: Ribosome biogenesis protein BOP1 homolog (808 aa).

The interval 1–56 (MTSPKGKPSPKRSAPAPTTAALTPRTEERTEGATSSASASASSHISSSFDSPRDDT) is disordered. Low complexity-rich tracts occupy residues 12–24 (RSAP…ALTP) and 33–50 (ATSS…SSFD). 5 WD repeats span residues 430-469 (GHTA…LMKR), 640-680 (KFSE…RRFK), 682-720 (SGGV…KPYK), 724-766 (SHRG…DYNK), and 777-808 (KHQR…AWTE).

The protein belongs to the WD repeat BOP1/ERB1 family.

It localises to the nucleus. It is found in the nucleolus. The protein resides in the nucleoplasm. Functionally, required for maturation of ribosomal RNAs and formation of the large ribosomal subunit. This Leishmania infantum protein is Ribosome biogenesis protein BOP1 homolog.